The following is a 430-amino-acid chain: Probable acetate kinase (430 aa).

Residue Asn-12 participates in Mg(2+) binding. Lys-19 contributes to the ATP binding site. Arg-100 serves as a coordination point for substrate. The Proton donor/acceptor role is filled by Asp-159. 220–224 (HLGSG) serves as a coordination point for ATP. Glu-416 is a binding site for Mg(2+).

It belongs to the acetokinase family. Mg(2+) is required as a cofactor.

It carries out the reaction acetate + ATP = acetyl phosphate + ADP. Its pathway is metabolic intermediate biosynthesis; acetyl-CoA biosynthesis; acetyl-CoA from acetate: step 1/2. The protein is Probable acetate kinase of Cryptococcus neoformans var. neoformans serotype D (strain B-3501A) (Filobasidiella neoformans).